A 382-amino-acid chain; its full sequence is Lipid-A-disaccharide synthase (382 aa).

The protein belongs to the LpxB family.

The enzyme catalyses 2-N,3-O-bis[(3R)-3-hydroxytetradecanoyl]-alpha-D-glucosaminyl 1-phosphate + UDP-2-N,3-O-bis[(3R)-3-hydroxytetradecanoyl]-alpha-D-glucosamine = lipid A disaccharide (E. coli) + UDP + H(+). It catalyses the reaction a lipid X + a UDP-2-N,3-O-bis[(3R)-3-hydroxyacyl]-alpha-D-glucosamine = a lipid A disaccharide + UDP + H(+). It functions in the pathway glycolipid biosynthesis; lipid IV(A) biosynthesis; lipid IV(A) from (3R)-3-hydroxytetradecanoyl-[acyl-carrier-protein] and UDP-N-acetyl-alpha-D-glucosamine: step 5/6. Functionally, condensation of UDP-2,3-diacylglucosamine and 2,3-diacylglucosamine-1-phosphate to form lipid A disaccharide, a precursor of lipid A, a phosphorylated glycolipid that anchors the lipopolysaccharide to the outer membrane of the cell. This chain is Lipid-A-disaccharide synthase, found in Enterobacter sp. (strain 638).